Here is a 669-residue protein sequence, read N- to C-terminus: DNA mismatch repair protein MutL (669 aa).

The interval 343–408 (SAFHRAEPEE…RAPSDSSVRE (66 aa)) is disordered. Residues 344 to 356 (AFHRAEPEERESQ) are compositionally biased toward basic and acidic residues. The segment covering 357–372 (PETTPQYSPQSVSTTV) has biased composition (polar residues). Positions 390 to 408 (TDYEIKPRDRAPSDSSVRE) are enriched in basic and acidic residues.

The protein belongs to the DNA mismatch repair MutL/HexB family.

Its function is as follows. This protein is involved in the repair of mismatches in DNA. It is required for dam-dependent methyl-directed DNA mismatch repair. May act as a 'molecular matchmaker', a protein that promotes the formation of a stable complex between two or more DNA-binding proteins in an ATP-dependent manner without itself being part of a final effector complex. The protein is DNA mismatch repair protein MutL of Vibrio parahaemolyticus serotype O3:K6 (strain RIMD 2210633).